Here is a 419-residue protein sequence, read N- to C-terminus: Tyrosine--tRNA ligase 2 (419 aa).

L-tyrosine is bound at residue Tyr-34. The 'HIGH' region signature appears at 39-48 (PTGDSMHIGH). Residues Tyr-168 and Gln-172 each coordinate L-tyrosine. The 'KMSKS' region motif lies at 230–234 (KFGKS). Lys-233 is a binding site for ATP. The 67-residue stretch at 352–418 (KNIVEWLVDL…GKKNYSLVKL (67 aa)) folds into the S4 RNA-binding domain.

It belongs to the class-I aminoacyl-tRNA synthetase family. TyrS type 1 subfamily. As to quaternary structure, homodimer.

Its subcellular location is the cytoplasm. It carries out the reaction tRNA(Tyr) + L-tyrosine + ATP = L-tyrosyl-tRNA(Tyr) + AMP + diphosphate + H(+). In terms of biological role, catalyzes the attachment of tyrosine to tRNA(Tyr) in a two-step reaction: tyrosine is first activated by ATP to form Tyr-AMP and then transferred to the acceptor end of tRNA(Tyr). This Bacillus thuringiensis subsp. konkukian (strain 97-27) protein is Tyrosine--tRNA ligase 2.